A 69-amino-acid polypeptide reads, in one-letter code: Photosystem I reaction center subunit IV (69 aa).

Belongs to the PsaE family.

Its subcellular location is the cellular thylakoid membrane. In terms of biological role, stabilizes the interaction between PsaC and the PSI core, assists the docking of the ferredoxin to PSI and interacts with ferredoxin-NADP oxidoreductase. The polypeptide is Photosystem I reaction center subunit IV (Prochlorococcus marinus (strain MIT 9215)).